Consider the following 320-residue polypeptide: Non-structural protein 5 (320 aa).

This Lymantria dispar (Gypsy moth) protein is Non-structural protein 5 (S9).